Consider the following 526-residue polypeptide: 1,4-beta-D-glucan cellobiohydrolase B (526 aa).

The signal sequence occupies residues 1–23 (MASSFQLYKALLFFSSLLSAVQA). The segment at 24-458 (QKVGTQQAEV…SNIKFGPIGS (435 aa)) is catalytic. The active-site Nucleophile is the E235. The active-site Proton donor is the E240. N-linked (GlcNAc...) asparagine glycans are attached at residues N293 and N400. The interval 459 to 490 (TFGNGGGSGPTTTVTTSTATSTTSSATSTATG) is ser/Thr-rich linker. Positions 464–488 (GGSGPTTTVTTSTATSTTSSATSTA) are disordered. A compositionally biased stretch (low complexity) spans 468 to 488 (PTTTVTTSTATSTTSSATSTA). Residues 490 to 526 (GQAQHWEQCGGNGWTGPTVCASPWACTVVNSWYSQCL) form the CBM1 domain. Cystine bridges form between C498-C515 and C509-C525.

This sequence belongs to the glycosyl hydrolase 7 (cellulase C) family.

Its subcellular location is the secreted. It carries out the reaction Hydrolysis of (1-&gt;4)-beta-D-glucosidic linkages in cellulose and cellotetraose, releasing cellobiose from the non-reducing ends of the chains.. The biological conversion of cellulose to glucose generally requires three types of hydrolytic enzymes: (1) Endoglucanases which cut internal beta-1,4-glucosidic bonds; (2) Exocellobiohydrolases that cut the disaccharide cellobiose from the non-reducing end of the cellulose polymer chain; (3) Beta-1,4-glucosidases which hydrolyze the cellobiose and other short cello-oligosaccharides to glucose. The sequence is that of 1,4-beta-D-glucan cellobiohydrolase B (cbhB) from Emericella nidulans (strain FGSC A4 / ATCC 38163 / CBS 112.46 / NRRL 194 / M139) (Aspergillus nidulans).